The primary structure comprises 185 residues: Orotate phosphoribosyltransferase (185 aa).

Residues R98, K99, K102, H104, and 128–136 (EDVTTTGGS) each bind 5-phospho-alpha-D-ribose 1-diphosphate. T132 and R160 together coordinate orotate.

The protein belongs to the purine/pyrimidine phosphoribosyltransferase family. PyrE subfamily. In terms of assembly, homodimer. Requires Mg(2+) as cofactor.

It catalyses the reaction orotidine 5'-phosphate + diphosphate = orotate + 5-phospho-alpha-D-ribose 1-diphosphate. It functions in the pathway pyrimidine metabolism; UMP biosynthesis via de novo pathway; UMP from orotate: step 1/2. Functionally, catalyzes the transfer of a ribosyl phosphate group from 5-phosphoribose 1-diphosphate to orotate, leading to the formation of orotidine monophosphate (OMP). This is Orotate phosphoribosyltransferase from Bradyrhizobium sp. (strain ORS 278).